The sequence spans 61 residues: Small ribosomal subunit protein uS14 (61 aa).

4 residues coordinate Zn(2+): Cys-24, Cys-27, Cys-40, and Cys-43.

The protein belongs to the universal ribosomal protein uS14 family. Zinc-binding uS14 subfamily. In terms of assembly, part of the 30S ribosomal subunit. Contacts proteins S3 and S10. Zn(2+) is required as a cofactor.

Binds 16S rRNA, required for the assembly of 30S particles and may also be responsible for determining the conformation of the 16S rRNA at the A site. This is Small ribosomal subunit protein uS14 from Thermoanaerobacter sp. (strain X514).